We begin with the raw amino-acid sequence, 171 residues long: NADH-quinone oxidoreductase subunit I 1 (171 aa).

4Fe-4S ferredoxin-type domains lie at 39–71 (IVLT…LSKA) and 81–110 (EHFR…LTPD). 8 residues coordinate [4Fe-4S] cluster: Cys-51, Cys-54, Cys-57, Cys-61, Cys-90, Cys-93, Cys-96, and Cys-100.

Belongs to the complex I 23 kDa subunit family. As to quaternary structure, NDH-1 is composed of 14 different subunits. Subunits NuoA, H, J, K, L, M, N constitute the membrane sector of the complex. The cofactor is [4Fe-4S] cluster.

The protein resides in the cell inner membrane. The catalysed reaction is a quinone + NADH + 5 H(+)(in) = a quinol + NAD(+) + 4 H(+)(out). In terms of biological role, NDH-1 shuttles electrons from NADH, via FMN and iron-sulfur (Fe-S) centers, to quinones in the respiratory chain. The immediate electron acceptor for the enzyme in this species is believed to be ubiquinone. Couples the redox reaction to proton translocation (for every two electrons transferred, four hydrogen ions are translocated across the cytoplasmic membrane), and thus conserves the redox energy in a proton gradient. In Rhodopseudomonas palustris (strain HaA2), this protein is NADH-quinone oxidoreductase subunit I 1.